The following is a 325-amino-acid chain: GMP reductase (325 aa).

Cys-174 acts as the Thioimidate intermediate in catalysis. 203–226 (IIADGGLRTHGDIAKSIRFGATMV) contributes to the NADP(+) binding site.

It belongs to the IMPDH/GMPR family. GuaC type 2 subfamily.

The catalysed reaction is IMP + NH4(+) + NADP(+) = GMP + NADPH + 2 H(+). Its function is as follows. Catalyzes the irreversible NADPH-dependent deamination of GMP to IMP. It functions in the conversion of nucleobase, nucleoside and nucleotide derivatives of G to A nucleotides, and in maintaining the intracellular balance of A and G nucleotides. This is GMP reductase from Staphylococcus epidermidis (strain ATCC 35984 / DSM 28319 / BCRC 17069 / CCUG 31568 / BM 3577 / RP62A).